The following is a 452-amino-acid chain: Phosphoglucosamine mutase (452 aa).

S98 serves as the catalytic Phosphoserine intermediate. Residues S98, D239, D241, and D243 each coordinate Mg(2+). A Phosphoserine modification is found at S98.

It belongs to the phosphohexose mutase family. Mg(2+) serves as cofactor. Activated by phosphorylation.

The enzyme catalyses alpha-D-glucosamine 1-phosphate = D-glucosamine 6-phosphate. In terms of biological role, catalyzes the conversion of glucosamine-6-phosphate to glucosamine-1-phosphate. In Anaplasma marginale (strain Florida), this protein is Phosphoglucosamine mutase.